A 102-amino-acid polypeptide reads, in one-letter code: Small ribosomal subunit protein uS10 (102 aa).

This sequence belongs to the universal ribosomal protein uS10 family. As to quaternary structure, part of the 30S ribosomal subunit.

In terms of biological role, involved in the binding of tRNA to the ribosomes. This is Small ribosomal subunit protein uS10 from Staphylococcus haemolyticus (strain JCSC1435).